The primary structure comprises 977 residues: Bifunctional glutamine synthetase adenylyltransferase/adenylyl-removing enzyme (977 aa).

The adenylyl removase stretch occupies residues 1 to 457 (MRLPLPSDLP…HFRQVIADPD (457 aa)). Residues 468–977 (GGEWSPLWEQ…RRIWGELGLS (510 aa)) are adenylyl transferase.

This sequence belongs to the GlnE family. It depends on Mg(2+) as a cofactor.

The enzyme catalyses [glutamine synthetase]-O(4)-(5'-adenylyl)-L-tyrosine + phosphate = [glutamine synthetase]-L-tyrosine + ADP. The catalysed reaction is [glutamine synthetase]-L-tyrosine + ATP = [glutamine synthetase]-O(4)-(5'-adenylyl)-L-tyrosine + diphosphate. Its function is as follows. Involved in the regulation of glutamine synthetase GlnA, a key enzyme in the process to assimilate ammonia. When cellular nitrogen levels are high, the C-terminal adenylyl transferase (AT) inactivates GlnA by covalent transfer of an adenylyl group from ATP to specific tyrosine residue of GlnA, thus reducing its activity. Conversely, when nitrogen levels are low, the N-terminal adenylyl removase (AR) activates GlnA by removing the adenylyl group by phosphorolysis, increasing its activity. The regulatory region of GlnE binds the signal transduction protein PII (GlnB) which indicates the nitrogen status of the cell. The chain is Bifunctional glutamine synthetase adenylyltransferase/adenylyl-removing enzyme from Pseudomonas putida (strain ATCC 47054 / DSM 6125 / CFBP 8728 / NCIMB 11950 / KT2440).